The following is a 396-amino-acid chain: Elongation factor Tu (396 aa).

A tr-type G domain is found at 10–206 (KPHCNIGTIG…NVDEYIPQPE (197 aa)). Positions 19–26 (GHVDHGKT) are G1. GTP is bound at residue 19 to 26 (GHVDHGKT). T26 serves as a coordination point for Mg(2+). The G2 stretch occupies residues 60-64 (GITIS). The G3 stretch occupies residues 81–84 (DCPG). Residues 81–85 (DCPGH) and 136–139 (NKCD) each bind GTP. The segment at 136 to 139 (NKCD) is G4. Positions 174 to 176 (SAL) are G5.

This sequence belongs to the TRAFAC class translation factor GTPase superfamily. Classic translation factor GTPase family. EF-Tu/EF-1A subfamily. Monomer.

The protein localises to the cytoplasm. The catalysed reaction is GTP + H2O = GDP + phosphate + H(+). GTP hydrolase that promotes the GTP-dependent binding of aminoacyl-tRNA to the A-site of ribosomes during protein biosynthesis. The polypeptide is Elongation factor Tu (Bradyrhizobium diazoefficiens (strain JCM 10833 / BCRC 13528 / IAM 13628 / NBRC 14792 / USDA 110)).